We begin with the raw amino-acid sequence, 95 residues long: Aspartyl/glutamyl-tRNA(Asn/Gln) amidotransferase subunit C (95 aa).

It belongs to the GatC family. In terms of assembly, heterotrimer of A, B and C subunits.

The enzyme catalyses L-glutamyl-tRNA(Gln) + L-glutamine + ATP + H2O = L-glutaminyl-tRNA(Gln) + L-glutamate + ADP + phosphate + H(+). It catalyses the reaction L-aspartyl-tRNA(Asn) + L-glutamine + ATP + H2O = L-asparaginyl-tRNA(Asn) + L-glutamate + ADP + phosphate + 2 H(+). In terms of biological role, allows the formation of correctly charged Asn-tRNA(Asn) or Gln-tRNA(Gln) through the transamidation of misacylated Asp-tRNA(Asn) or Glu-tRNA(Gln) in organisms which lack either or both of asparaginyl-tRNA or glutaminyl-tRNA synthetases. The reaction takes place in the presence of glutamine and ATP through an activated phospho-Asp-tRNA(Asn) or phospho-Glu-tRNA(Gln). The sequence is that of Aspartyl/glutamyl-tRNA(Asn/Gln) amidotransferase subunit C from Rhizorhabdus wittichii (strain DSM 6014 / CCUG 31198 / JCM 15750 / NBRC 105917 / EY 4224 / RW1) (Sphingomonas wittichii).